Reading from the N-terminus, the 424-residue chain is Tyrosine--tRNA ligase 1 (424 aa).

Tyr37 lines the L-tyrosine pocket. The short motif at 42–51 is the 'HIGH' region element; sequence PTADSLHLGH. Residues Tyr175 and Gln179 each contribute to the L-tyrosine site. A 'KMSKS' region motif is present at residues 235–239; it reads KFGKT. Lys238 contacts ATP. Positions 357–414 constitute an S4 RNA-binding domain; the sequence is ADLQQALVNAGLVPSRGQARTMISSNAVAINGEKQSEPEYLFTDSNRLFDRYTLLRRG.

The protein belongs to the class-I aminoacyl-tRNA synthetase family. TyrS type 1 subfamily. In terms of assembly, homodimer.

Its subcellular location is the cytoplasm. The catalysed reaction is tRNA(Tyr) + L-tyrosine + ATP = L-tyrosyl-tRNA(Tyr) + AMP + diphosphate + H(+). Catalyzes the attachment of tyrosine to tRNA(Tyr) in a two-step reaction: tyrosine is first activated by ATP to form Tyr-AMP and then transferred to the acceptor end of tRNA(Tyr). This chain is Tyrosine--tRNA ligase 1, found in Photorhabdus laumondii subsp. laumondii (strain DSM 15139 / CIP 105565 / TT01) (Photorhabdus luminescens subsp. laumondii).